Here is a 229-residue protein sequence, read N- to C-terminus: Putative N-acetylmannosamine-6-phosphate 2-epimerase 2 (229 aa).

This sequence belongs to the NanE family.

The catalysed reaction is an N-acyl-D-glucosamine 6-phosphate = an N-acyl-D-mannosamine 6-phosphate. The protein operates within amino-sugar metabolism; N-acetylneuraminate degradation; D-fructose 6-phosphate from N-acetylneuraminate: step 3/5. Its function is as follows. Converts N-acetylmannosamine-6-phosphate (ManNAc-6-P) to N-acetylglucosamine-6-phosphate (GlcNAc-6-P). This is Putative N-acetylmannosamine-6-phosphate 2-epimerase 2 from Salmonella paratyphi A (strain ATCC 9150 / SARB42).